The chain runs to 855 residues: DNA mismatch repair protein MutS (855 aa).

613–620 lines the ATP pocket; the sequence is GPNMGGKS. Positions 796-817 are disordered; the sequence is TTSLPHEQPRAKPGKPAIPQQS.

Belongs to the DNA mismatch repair MutS family.

Its function is as follows. This protein is involved in the repair of mismatches in DNA. It is possible that it carries out the mismatch recognition step. This protein has a weak ATPase activity. In Pseudomonas syringae pv. tomato (strain ATCC BAA-871 / DC3000), this protein is DNA mismatch repair protein MutS.